Reading from the N-terminus, the 215-residue chain is C-type lectin domain family 4 member D (215 aa).

The Cytoplasmic portion of the chain corresponds to 1-17 (MGLEKPQSKLEGGMHPQ). The helical; Signal-anchor for type II membrane protein transmembrane segment at 18 to 38 (LIPSVIAVVFILLLSVCFIAS) threads the bilayer. Topologically, residues 39–215 (CLVTHHNFSR…ICKIPGTTLN (177 aa)) are extracellular. Residue Asn-45 is glycosylated (N-linked (GlcNAc...) asparagine). The cysteines at positions 84 and 95 are disulfide-linked. The 118-residue stretch at 91–208 (FQSNCYFPLT…CNFEASRICK (118 aa)) folds into the C-type lectin domain. Residues Asn-102 and Asn-111 are each glycosylated (N-linked (GlcNAc...) asparagine). Intrachain disulfides connect Cys-112/Cys-207 and Cys-182/Cys-199. Ca(2+)-binding residues include Glu-173, Asp-175, Asn-195, and Asp-196.

In terms of assembly, heterodimer with CLEC4E; disulfide-linked. CLEC4E acts as a bridge for interaction between CLEC4D and FCER1G to form a functional complex. Heterodimer with CLEC6A; this heterodimer forms a pattern recognition receptor (PRR) against fungal infection. Expressed weakly in peripheral blood leukocytes, bone marrow and spleen. Expression is confined mostly in monocytes and macrophage and seems to be up-regulated by IL-6, IL-10, TNF-alpha and IFN-gamma.

The protein resides in the cell membrane. Calcium-dependent lectin that acts as a pattern recognition receptor (PRR) of the innate immune system: recognizes damage-associated molecular patterns (DAMPs) of pathogen-associated molecular patterns (PAMPs) of bacteria and fungi. The PAMPs include alpha-mannans on C.albicans hypheas and mycobacterial trehalose 6,6'-dimycolate (TDM). Interacts with signaling adapter Fc receptor gamma chain/FCER1G, likely via CLEC4E, to form a functional complex in myeloid cells. Binding of mycobacterial TDM or C.albicans alpha-mannans to this receptor complex leads to phosphorylation of the immunoreceptor tyrosine-based activation motif (ITAM) of FCER1G, triggering activation of SYK, CARD9 and NF-kappa-B, consequently driving maturation of antigen-presenting cells and shaping antigen-specific priming of T-cells toward effector T-helper 1 and T-helper 17 cell subtypes. The heterodimer formed with CLEC6A is active against fungal infection. Functions as an endocytic receptor. May be involved in antigen uptake at the site of infection, either for clearance of the antigen, or for processing and further presentation to T-cells. The polypeptide is C-type lectin domain family 4 member D (Homo sapiens (Human)).